Consider the following 70-residue polypeptide: ATP synthase subunit c (70 aa).

2 consecutive transmembrane segments (helical) span residues 4 to 24 and 47 to 67; these read IASA…NGLI and FVGV…AFMV.

Belongs to the ATPase C chain family. F-type ATPases have 2 components, F(1) - the catalytic core - and F(0) - the membrane proton channel. F(1) has five subunits: alpha(3), beta(3), gamma(1), delta(1), epsilon(1). F(0) has three main subunits: a(1), b(2) and c(10-14). The alpha and beta chains form an alternating ring which encloses part of the gamma chain. F(1) is attached to F(0) by a central stalk formed by the gamma and epsilon chains, while a peripheral stalk is formed by the delta and b chains.

The protein localises to the cell membrane. F(1)F(0) ATP synthase produces ATP from ADP in the presence of a proton or sodium gradient. F-type ATPases consist of two structural domains, F(1) containing the extramembraneous catalytic core and F(0) containing the membrane proton channel, linked together by a central stalk and a peripheral stalk. During catalysis, ATP synthesis in the catalytic domain of F(1) is coupled via a rotary mechanism of the central stalk subunits to proton translocation. Its function is as follows. Key component of the F(0) channel; it plays a direct role in translocation across the membrane. A homomeric c-ring of between 10-14 subunits forms the central stalk rotor element with the F(1) delta and epsilon subunits. This chain is ATP synthase subunit c, found in Priestia megaterium (strain ATCC 12872 / QMB1551) (Bacillus megaterium).